The sequence spans 191 residues: Leucyl/phenylalanyl-tRNA--protein transferase (191 aa).

This sequence belongs to the L/F-transferase family.

It localises to the cytoplasm. The enzyme catalyses N-terminal L-lysyl-[protein] + L-leucyl-tRNA(Leu) = N-terminal L-leucyl-L-lysyl-[protein] + tRNA(Leu) + H(+). It catalyses the reaction N-terminal L-arginyl-[protein] + L-leucyl-tRNA(Leu) = N-terminal L-leucyl-L-arginyl-[protein] + tRNA(Leu) + H(+). The catalysed reaction is L-phenylalanyl-tRNA(Phe) + an N-terminal L-alpha-aminoacyl-[protein] = an N-terminal L-phenylalanyl-L-alpha-aminoacyl-[protein] + tRNA(Phe). Functions in the N-end rule pathway of protein degradation where it conjugates Leu, Phe and, less efficiently, Met from aminoacyl-tRNAs to the N-termini of proteins containing an N-terminal arginine or lysine. In Rubrobacter xylanophilus (strain DSM 9941 / JCM 11954 / NBRC 16129 / PRD-1), this protein is Leucyl/phenylalanyl-tRNA--protein transferase.